Reading from the N-terminus, the 181-residue chain is MEMGNGMKDARNLDKQWVVLSELSAELVNRGIKVPEIVFEKLRLANALLSYYILDPHASINILANVERELNYVQSQLFSLCDTELTEKYLDRMIKAIRGEINAKFPVSKSNYNREVKKRGKVEAIRVKLQKEMQIERLSDLGEWHGVIFEYSDEKDKVIIEGNIDRVKRALKDFAFMWKED.

This is an uncharacterized protein from Methanocaldococcus jannaschii (strain ATCC 43067 / DSM 2661 / JAL-1 / JCM 10045 / NBRC 100440) (Methanococcus jannaschii).